A 188-amino-acid polypeptide reads, in one-letter code: dCTP deaminase (188 aa).

Residue 109–114 (KSTYAR) coordinates dCTP. The active-site Proton donor/acceptor is the glutamate 135. DCTP-binding residues include glutamine 154, tyrosine 168, and glutamine 178.

It belongs to the dCTP deaminase family. In terms of assembly, homotrimer.

The catalysed reaction is dCTP + H2O + H(+) = dUTP + NH4(+). The protein operates within pyrimidine metabolism; dUMP biosynthesis; dUMP from dCTP (dUTP route): step 1/2. Functionally, catalyzes the deamination of dCTP to dUTP. This chain is dCTP deaminase, found in Helicobacter pylori (strain J99 / ATCC 700824) (Campylobacter pylori J99).